Consider the following 119-residue polypeptide: Large ribosomal subunit protein uL22 (119 aa).

This sequence belongs to the universal ribosomal protein uL22 family. Part of the 50S ribosomal subunit.

In terms of biological role, this protein binds specifically to 23S rRNA; its binding is stimulated by other ribosomal proteins, e.g. L4, L17, and L20. It is important during the early stages of 50S assembly. It makes multiple contacts with different domains of the 23S rRNA in the assembled 50S subunit and ribosome. Its function is as follows. The globular domain of the protein is located near the polypeptide exit tunnel on the outside of the subunit, while an extended beta-hairpin is found that lines the wall of the exit tunnel in the center of the 70S ribosome. This Trichodesmium erythraeum (strain IMS101) protein is Large ribosomal subunit protein uL22.